The sequence spans 134 residues: Large ribosomal subunit protein uL18 (134 aa).

It belongs to the universal ribosomal protein uL18 family. Part of the 50S ribosomal subunit; part of the 5S rRNA/L5/L18/L25 subcomplex. Contacts the 5S and 23S rRNAs.

Its function is as follows. This is one of the proteins that bind and probably mediate the attachment of the 5S RNA into the large ribosomal subunit, where it forms part of the central protuberance. In Corynebacterium efficiens (strain DSM 44549 / YS-314 / AJ 12310 / JCM 11189 / NBRC 100395), this protein is Large ribosomal subunit protein uL18.